Consider the following 83-residue polypeptide: Mu-theraphotoxin-Hhn2n (83 aa).

An N-terminal signal peptide occupies residues 1 to 21 (MKASMYLALAGLVLLFVVGYA). Residues 22–48 (SESEEKEFPRELLSKIFAVDDFKGEER) constitute a propeptide that is removed on maturation. Intrachain disulfides connect C50–C65, C57–C70, and C64–C77. L81 bears the Leucine amide mark.

This sequence belongs to the neurotoxin 10 (Hwtx-1) family. 15 (Hntx-3) subfamily. Monomer. As to expression, expressed by the venom gland.

It localises to the secreted. Its function is as follows. Lethal neurotoxin. Selectively blocks tetrodotoxin-sensitive voltage-gated sodium channels (Nav). Does not affect tetrodotoxin-resistant voltage-gated sodium channels or calcium channels. This chain is Mu-theraphotoxin-Hhn2n, found in Cyriopagopus hainanus (Chinese bird spider).